A 1009-amino-acid polypeptide reads, in one-letter code: Delphilin (1009 aa).

5 disordered regions span residues 28-82 (CRSK…SNTM), 170-193 (EGPVDYPQSDSEPEETPSAPRSRS), 322-369 (ASPD…SRDT), 414-635 (ELSS…SDNN), and 990-1009 (SETQGTENPKSPRIASPLAW). Positions 44–53 (RSQDHHERPQ) are enriched in basic and acidic residues. Residues 95 to 172 (TIRVYRGKKS…MPSLVVEEGP (78 aa)) form the PDZ domain. The segment covering 322-332 (ASPDSVDSNPY) has biased composition (polar residues). Composition is skewed to low complexity over residues 334–352 (SLDSPPASPLPSDELSPLP) and 427–439 (DDSTSVSYSSGSD). 3 stretches are compositionally biased toward pro residues: residues 441–455 (IPPPPQSPPPPPPPL), 462–477 (SPLPITPEHLPQPPPA), and 484–493 (IAPPPPPPRP). Over residues 521–535 (SSPQPSSQPILQLHQ) the composition is skewed to low complexity. Over residues 557–602 (AQHTRLQHPSQSIYQSQQTTVPRTSPSLTKQKSLHSQPSQQSFEGT) the composition is skewed to polar residues. The span at 607–628 (VPPPPPPPLPPPCDPPPLPKPS) shows a compositional bias: pro residues. One can recognise an FH2 domain in the interval 629 to 1009 (PKASDNNHMS…SPRIASPLAW (381 aa)).

The protein resides in the postsynaptic cell membrane. Postsynaptic scaffolding protein. The chain is Delphilin (grid2ip) from Danio rerio (Zebrafish).